We begin with the raw amino-acid sequence, 197 residues long: Recombination protein RecR (197 aa).

The segment at C57–C72 adopts a C4-type zinc-finger fold. Residues S79–P174 form the Toprim domain.

This sequence belongs to the RecR family.

May play a role in DNA repair. It seems to be involved in an RecBC-independent recombinational process of DNA repair. It may act with RecF and RecO. The polypeptide is Recombination protein RecR (Trichlorobacter lovleyi (strain ATCC BAA-1151 / DSM 17278 / SZ) (Geobacter lovleyi)).